The primary structure comprises 380 residues: Polygalacturonase 2 (380 aa).

Residues 1–20 (MIAGSKLLMLGLFGALAVHA) form the signal peptide. A propeptide spanning residues 21–38 (LPEPAKAQVTAAPKLEER) is cleaved from the precursor. Cys42 and Cys60 are disulfide-bonded. PbH1 repeat units lie at residues 173-204 (ATDLTLSGITVDNRDGDTDEGGHNTDAFDVGS) and 205-226 (STGITITGATVYNQDDCLAVNS). Asp219 (proton donor) is an active-site residue. Cysteines 221 and 237 form a disulfide. Residue His241 is part of the active site. PbH1 repeat units lie at residues 256–277 (VANVIIENSQIQDSTNGVRIKT), 285–307 (VKNVTYKDITLSGITKYGIVIEQ), and 319–364 (TDGV…SVSG). The N-linked (GlcNAc...) asparagine glycan is linked to Asn287. Cystine bridges form between Cys347-Cys352 and Cys371-Cys380.

Belongs to the glycosyl hydrolase 28 family.

The protein localises to the secreted. The enzyme catalyses (1,4-alpha-D-galacturonosyl)n+m + H2O = (1,4-alpha-D-galacturonosyl)n + (1,4-alpha-D-galacturonosyl)m.. This chain is Polygalacturonase 2 (PG2), found in Penicillium olsonii.